A 1174-amino-acid polypeptide reads, in one-letter code: DNA-directed RNA polymerase subunit beta' (1174 aa).

Zn(2+) contacts are provided by Cys60, Cys62, Cys75, and Cys78. Positions 450, 452, and 454 each coordinate Mg(2+). Cys795, Cys869, Cys876, and Cys879 together coordinate Zn(2+).

The protein belongs to the RNA polymerase beta' chain family. In terms of assembly, the RNAP catalytic core consists of 2 alpha, 1 beta, 1 beta' and 1 omega subunit. When a sigma factor is associated with the core the holoenzyme is formed, which can initiate transcription. Mg(2+) is required as a cofactor. Zn(2+) serves as cofactor.

The enzyme catalyses RNA(n) + a ribonucleoside 5'-triphosphate = RNA(n+1) + diphosphate. DNA-dependent RNA polymerase catalyzes the transcription of DNA into RNA using the four ribonucleoside triphosphates as substrates. This is DNA-directed RNA polymerase subunit beta' from Clostridium kluyveri (strain ATCC 8527 / DSM 555 / NBRC 12016 / NCIMB 10680 / K1).